The following is a 392-amino-acid chain: G2/mitotic-specific cyclin-B2 (392 aa).

This sequence belongs to the cyclin family. Cyclin AB subfamily. Interacts with the CDK1 protein kinase to form a serine/threonine kinase holoenzyme complex also known as maturation promoting factor (MPF). The cyclin subunit imparts substrate specificity to the complex.

Essential for the control of the cell cycle at the G2/M (mitosis) transition. In Rana japonica (Japanese reddish frog), this protein is G2/mitotic-specific cyclin-B2 (CCNB2).